Consider the following 156-residue polypeptide: Small ribosomal subunit protein uS7 (156 aa).

It belongs to the universal ribosomal protein uS7 family. In terms of assembly, part of the 30S ribosomal subunit. Contacts proteins S9 and S11.

In terms of biological role, one of the primary rRNA binding proteins, it binds directly to 16S rRNA where it nucleates assembly of the head domain of the 30S subunit. Is located at the subunit interface close to the decoding center, probably blocks exit of the E-site tRNA. This chain is Small ribosomal subunit protein uS7, found in Neisseria gonorrhoeae (strain ATCC 700825 / FA 1090).